Reading from the N-terminus, the 90-residue chain is High mobility group nucleosome-binding domain-containing protein 4 (90 aa).

The interval 1-90 (MPKRKAKGDA…QKAEGTGDAK (90 aa)) is disordered. Residues 7-23 (KGDAKGDKGKVKDEPQR) show a composition bias toward basic and acidic residues. ADP-ribosylserine is present on S29. Residues 37–64 (PEPRPKKAPAKKGEKLAKGRKGKAEVSK) are compositionally biased toward basic and acidic residues. Residues 65-83 (DGNNPAKNRDASTVQSQKA) are compositionally biased toward polar residues. S80 carries the phosphoserine modification. K82 carries the N6-acetyllysine modification.

This sequence belongs to the HMGN family.

The protein localises to the nucleus. This chain is High mobility group nucleosome-binding domain-containing protein 4 (HMGN4), found in Bos taurus (Bovine).